The chain runs to 320 residues: Meso-diaminopimelate D-dehydrogenase (320 aa).

Residues 11–14 (YGNL), 35–37 (SRR), 65–68 (CMGS), 88–90 (TYD), and 117–121 (TGWDP) contribute to the NADP(+) site. Substrate-binding positions include Asp-90, Asp-120, Trp-144, 150–151 (QG), Thr-169, Arg-195, His-244, and Asn-270.

In terms of assembly, homodimer.

The catalysed reaction is meso-2,6-diaminopimelate + NADP(+) + H2O = (S)-2-amino-6-oxoheptanedioate + NH4(+) + NADPH + H(+). The protein operates within amino-acid biosynthesis; L-lysine biosynthesis via DAP pathway; DL-2,6-diaminopimelate from (S)-tetrahydrodipicolinate: step 1/1. With respect to regulation, l,L-2,6-diaminopimelate and D,D-2,6-diaminopimelate competitively inhibit the oxidative deamination of meso-2,6-diaminopimelate. The enzyme is also inhibited by L-cysteine, and by p-chloromercuribenzoate, iodoacetic acid and HgCl(2) in vitro. Its function is as follows. Catalyzes the reversible NADPH-dependent reductive amination of L-2-amino-6-oxopimelate, the acyclic form of L-tetrahydrodipicolinate, to generate the meso compound, D,L-2,6-diaminopimelate. Probably plays a role in lysine biosynthesis. Exhibits a high substrate specificity for meso-2,6-diaminopimelate, since L,L-2,6-diaminopimelate, D,D-2,6-diaminopimelate, L-glutamate, L-alanine, L-leucine, L-valine, L-aspartate, L-threonine, L-homoserine, L-methionine, L-lysine, L-serine, L-phenylalanine, L-tyrosine, L-tryptophan, L-ornithine, L-histidine, L-arginine, D-glutamate, and D-alanine are not substrates for the oxidative deamination reaction. Can use NAD(+) only poorly since the activity observed in the presence of NAD(+) is about 3% of that with NADP(+). The chain is Meso-diaminopimelate D-dehydrogenase (ddh) from Corynebacterium glutamicum (strain ATCC 13032 / DSM 20300 / JCM 1318 / BCRC 11384 / CCUG 27702 / LMG 3730 / NBRC 12168 / NCIMB 10025 / NRRL B-2784 / 534).